The sequence spans 375 residues: N5-carboxyaminoimidazole ribonucleotide synthase (375 aa).

Residues Arg108, Lys148, 153 to 159 (GYDGKGQ), 183 to 186 (EQYL), Glu191, His214, and 268 to 269 (NE) each bind ATP. In terms of domain architecture, ATP-grasp spans 112–298 (KQTLQDSGSN…QFDTHIKAIT (187 aa)).

This sequence belongs to the PurK/PurT family. As to quaternary structure, homodimer.

It carries out the reaction 5-amino-1-(5-phospho-beta-D-ribosyl)imidazole + hydrogencarbonate + ATP = 5-carboxyamino-1-(5-phospho-D-ribosyl)imidazole + ADP + phosphate + 2 H(+). It participates in purine metabolism; IMP biosynthesis via de novo pathway; 5-amino-1-(5-phospho-D-ribosyl)imidazole-4-carboxylate from 5-amino-1-(5-phospho-D-ribosyl)imidazole (N5-CAIR route): step 1/2. Functionally, catalyzes the ATP-dependent conversion of 5-aminoimidazole ribonucleotide (AIR) and HCO(3)(-) to N5-carboxyaminoimidazole ribonucleotide (N5-CAIR). The protein is N5-carboxyaminoimidazole ribonucleotide synthase of Staphylococcus saprophyticus subsp. saprophyticus (strain ATCC 15305 / DSM 20229 / NCIMB 8711 / NCTC 7292 / S-41).